The sequence spans 382 residues: Putative glutamate--cysteine ligase 2-1 (382 aa).

Belongs to the glutamate--cysteine ligase type 2 family. YbdK subfamily.

The catalysed reaction is L-cysteine + L-glutamate + ATP = gamma-L-glutamyl-L-cysteine + ADP + phosphate + H(+). ATP-dependent carboxylate-amine ligase which exhibits weak glutamate--cysteine ligase activity. The sequence is that of Putative glutamate--cysteine ligase 2-1 from Frankia casuarinae (strain DSM 45818 / CECT 9043 / HFP020203 / CcI3).